The primary structure comprises 119 residues: MLSNIIPLSIGAALGATARWLLNLAVPASIPPATGNLFANWIGAFLIGIFAETVNHPQWKLLLITGFLGSLTTLSGFSLETVTLLQLNRPASALANIFLHTAGSLLLTWLGLKIGAAVK.

A run of 4 helical transmembrane segments spans residues 5–25, 30–50, 59–79, and 97–117; these read IIPL…LNLA, IPPA…IGIF, WKLL…GFSL, and IFLH…IGAA. Positions 69 and 72 each coordinate Na(+).

The protein belongs to the fluoride channel Fluc/FEX (TC 1.A.43) family.

The protein localises to the cell inner membrane. The catalysed reaction is fluoride(in) = fluoride(out). With respect to regulation, na(+) is not transported, but it plays an essential structural role and its presence is essential for fluoride channel function. Functionally, fluoride-specific ion channel. Important for reducing fluoride concentration in the cell, thus reducing its toxicity. In Neisseria meningitidis serogroup B (strain ATCC BAA-335 / MC58), this protein is Fluoride-specific ion channel FluC.